A 231-amino-acid chain; its full sequence is Large ribosomal subunit protein uL1 (231 aa).

The protein belongs to the universal ribosomal protein uL1 family. As to quaternary structure, part of the 50S ribosomal subunit.

Its function is as follows. Binds directly to 23S rRNA. The L1 stalk is quite mobile in the ribosome, and is involved in E site tRNA release. Protein L1 is also a translational repressor protein, it controls the translation of the L11 operon by binding to its mRNA. In Pseudomonas putida (strain ATCC 700007 / DSM 6899 / JCM 31910 / BCRC 17059 / LMG 24140 / F1), this protein is Large ribosomal subunit protein uL1.